The primary structure comprises 326 residues: RNA/RNP complex-1-interacting phosphatase (326 aa).

The segment at 1–28 (MNQWHYGRYSRGRDFTARAPPKKKGKNQ) is disordered. Residues 59-206 (FEAKLMPEEC…LQKRRVRKNQ (148 aa)) enclose the Tyrosine-protein phosphatase domain. Cysteine 150 acts as the Phosphocysteine intermediate in catalysis. Residue 151–156 (THGLNR) participates in substrate binding. The active-site Proton donor/acceptor is arginine 156. The tract at residues 200–258 (RRVRKNQNASASRSGGLEDSAHLTEQVHTTNKPVNKGPKKSRRGGHLESSQHVQTQSSA) is disordered. Over residues 247–258 (ESSQHVQTQSSA) the composition is skewed to polar residues.

Belongs to the protein-tyrosine phosphatase family. Non-receptor class dual specificity subfamily. In terms of assembly, monomer. May interact with SFRS7 and SFRS9/SRP30C.

The protein localises to the nucleus. It localises to the nucleus speckle. Its function is as follows. Possesses RNA 5'-triphosphatase and diphosphatase activities, but displays a poor protein-tyrosine phosphatase activity. In addition, has phosphatase activity with ATP, ADP and O-methylfluorescein phosphate (in vitro). Binds to RNA. May participate in nuclear mRNA metabolism. This is RNA/RNP complex-1-interacting phosphatase (Dusp11) from Rattus norvegicus (Rat).